The sequence spans 254 residues: Adenosylcobinamide-GDP ribazoletransferase (254 aa).

The next 6 helical transmembrane spans lie at 36–56, 61–81, 114–134, 138–158, 197–217, and 232–252; these read YYPL…TLLL, PLVT…GIHL, ALSA…LLAL, LVPY…LIGV, WVLQ…ILLF, and LYGA…FPLL.

It belongs to the CobS family. It depends on Mg(2+) as a cofactor.

The protein resides in the cell membrane. The enzyme catalyses alpha-ribazole + adenosylcob(III)inamide-GDP = adenosylcob(III)alamin + GMP + H(+). It carries out the reaction alpha-ribazole 5'-phosphate + adenosylcob(III)inamide-GDP = adenosylcob(III)alamin 5'-phosphate + GMP + H(+). It participates in cofactor biosynthesis; adenosylcobalamin biosynthesis; adenosylcobalamin from cob(II)yrinate a,c-diamide: step 7/7. In terms of biological role, joins adenosylcobinamide-GDP and alpha-ribazole to generate adenosylcobalamin (Ado-cobalamin). Also synthesizes adenosylcobalamin 5'-phosphate from adenosylcobinamide-GDP and alpha-ribazole 5'-phosphate. This is Adenosylcobinamide-GDP ribazoletransferase from Desulfitobacterium hafniense (strain Y51).